Consider the following 63-residue polypeptide: Cytochrome c oxidase subunit 7C, mitochondrial (63 aa).

The transit peptide at 1–16 directs the protein to the mitochondrion; that stretch reads MLGQSIRRFTTSVVRR. The Mitochondrial matrix segment spans residues 17-34; sequence SHYEEGPGKNLPFSVENK. Lysine 25 bears the N6-acetyllysine; alternate mark. At lysine 25 the chain carries N6-succinyllysine; alternate. A helical membrane pass occupies residues 35–57; sequence WRLLAMMTVYFGSGFAAPFFIVR. At 58-63 the chain is on the mitochondrial intermembrane side; the sequence is HQLLKK.

Belongs to the cytochrome c oxidase VIIc family. Component of the cytochrome c oxidase (complex IV, CIV), a multisubunit enzyme composed of 14 subunits. The complex is composed of a catalytic core of 3 subunits MT-CO1, MT-CO2 and MT-CO3, encoded in the mitochondrial DNA, and 11 supernumerary subunits COX4I, COX5A, COX5B, COX6A, COX6B, COX6C, COX7A, COX7B, COX7C, COX8 and NDUFA4, which are encoded in the nuclear genome. The complex exists as a monomer or a dimer and forms supercomplexes (SCs) in the inner mitochondrial membrane with NADH-ubiquinone oxidoreductase (complex I, CI) and ubiquinol-cytochrome c oxidoreductase (cytochrome b-c1 complex, complex III, CIII), resulting in different assemblies (supercomplex SCI(1)III(2)IV(1) and megacomplex MCI(2)III(2)IV(2)). Interacts with RAB5IF.

The protein localises to the mitochondrion inner membrane. It functions in the pathway energy metabolism; oxidative phosphorylation. Component of the cytochrome c oxidase, the last enzyme in the mitochondrial electron transport chain which drives oxidative phosphorylation. The respiratory chain contains 3 multisubunit complexes succinate dehydrogenase (complex II, CII), ubiquinol-cytochrome c oxidoreductase (cytochrome b-c1 complex, complex III, CIII) and cytochrome c oxidase (complex IV, CIV), that cooperate to transfer electrons derived from NADH and succinate to molecular oxygen, creating an electrochemical gradient over the inner membrane that drives transmembrane transport and the ATP synthase. Cytochrome c oxidase is the component of the respiratory chain that catalyzes the reduction of oxygen to water. Electrons originating from reduced cytochrome c in the intermembrane space (IMS) are transferred via the dinuclear copper A center (CU(A)) of subunit 2 and heme A of subunit 1 to the active site in subunit 1, a binuclear center (BNC) formed by heme A3 and copper B (CU(B)). The BNC reduces molecular oxygen to 2 water molecules using 4 electrons from cytochrome c in the IMS and 4 protons from the mitochondrial matrix. The protein is Cytochrome c oxidase subunit 7C, mitochondrial (Cox7c) of Mus musculus (Mouse).